Reading from the N-terminus, the 181-residue chain is ADP-ribosylation factor 1 (181 aa).

Glycine 2 carries the N-myristoyl glycine lipid modification. Positions 3-16 are important for the stable binding to the membranes; the sequence is NMFANLFKGLFGKK. GTP-binding positions include 24-32, 126-129, and alanine 160; these read GLDAAGKTT and NKQD.

The protein belongs to the small GTPase superfamily. Arf family.

The protein localises to the golgi apparatus membrane. The enzyme catalyses GTP + H2O = GDP + phosphate + H(+). Its activity is regulated as follows. Alternates between an inactive GDP-bound form and an active GTP-bound form. Activated by a guanine nucleotide-exchange factor (GEF) and inactivated by GTPase-activating protein (GAP). Functionally, small GTPase involved in protein trafficking between different compartments. Modulates vesicle budding and uncoating within the Golgi complex. In its GTP-bound form, triggers the recruitment of coatomer proteins to the Golgi membrane. The hydrolysis of ARF1-bound GTP, which is mediated by ARFGAPs proteins, is required for dissociation of coat proteins from Golgi membranes and vesicles. This is ADP-ribosylation factor 1 (arf1) from Xenopus laevis (African clawed frog).